A 367-amino-acid polypeptide reads, in one-letter code: Peptide chain release factor 2 (367 aa).

Gln-250 carries the N5-methylglutamine modification.

Belongs to the prokaryotic/mitochondrial release factor family. Methylated by PrmC. Methylation increases the termination efficiency of RF2.

The protein localises to the cytoplasm. Functionally, peptide chain release factor 2 directs the termination of translation in response to the peptide chain termination codons UGA and UAA. The polypeptide is Peptide chain release factor 2 (Saccharopolyspora erythraea (strain ATCC 11635 / DSM 40517 / JCM 4748 / NBRC 13426 / NCIMB 8594 / NRRL 2338)).